The primary structure comprises 623 residues: Sulfite reductase [NADPH] flavoprotein alpha-component (623 aa).

The disordered stretch occupies residues 1 to 32 (MSFQKNEYSHKNVSEDNNGQGGNPPIASPLND). A Flavodoxin-like domain is found at 87–225 (LTIIFASQTG…AAEEWRKNAL (139 aa)). Residues 93–98 (SQTGNA), 140–143 (STNG), and 176–185 (LGDSSYEFFC) each bind FMN. The FAD-binding FR-type domain occupies 258–472 (QNPYTATLLT…VEHNNNFKLP (215 aa)). FAD is bound by residues threonine 346, alanine 380, 410–413 (RLYS), 428–430 (TVG), tyrosine 434, and 443–446 (GGAS). NADP(+)-binding positions include 543-544 (SR), 549-553 (KVYVQ), and aspartate 585. Tyrosine 623 is a binding site for FAD.

Belongs to the NADPH-dependent sulphite reductase flavoprotein subunit CysJ family. The protein in the N-terminal section; belongs to the flavodoxin family. It in the C-terminal section; belongs to the flavoprotein pyridine nucleotide cytochrome reductase family. In terms of assembly, alpha(8)-beta(8). The alpha component is a flavoprotein, the beta component is a hemoprotein. FAD serves as cofactor. Requires FMN as cofactor.

The catalysed reaction is hydrogen sulfide + 3 NADP(+) + 3 H2O = sulfite + 3 NADPH + 4 H(+). The protein operates within sulfur metabolism; hydrogen sulfide biosynthesis; hydrogen sulfide from sulfite (NADPH route): step 1/1. Functionally, component of the sulfite reductase complex that catalyzes the 6-electron reduction of sulfite to sulfide. This is one of several activities required for the biosynthesis of L-cysteine from sulfate. The flavoprotein component catalyzes the electron flow from NADPH -&gt; FAD -&gt; FMN to the hemoprotein component. The polypeptide is Sulfite reductase [NADPH] flavoprotein alpha-component (Vibrio parahaemolyticus serotype O3:K6 (strain RIMD 2210633)).